Consider the following 78-residue polypeptide: Large ribosomal subunit protein bL28 (78 aa).

It belongs to the bacterial ribosomal protein bL28 family.

This Francisella tularensis subsp. holarctica (strain FTNF002-00 / FTA) protein is Large ribosomal subunit protein bL28.